The primary structure comprises 868 residues: DNA mismatch repair protein MutS (868 aa).

620–627 (GPNMGGKS) is a binding site for ATP.

This sequence belongs to the DNA mismatch repair MutS family.

This protein is involved in the repair of mismatches in DNA. It is possible that it carries out the mismatch recognition step. This protein has a weak ATPase activity. The sequence is that of DNA mismatch repair protein MutS from Desulforamulus reducens (strain ATCC BAA-1160 / DSM 100696 / MI-1) (Desulfotomaculum reducens).